The primary structure comprises 335 residues: 2-acylglycerol O-acyltransferase 1 (335 aa).

The next 2 helical transmembrane spans lie at 24–44 (WLLSFLLFAQVCLGIIVFLII) and 104–124 (YIFGFHPHGVLVVGAFGNFCT). N-linked (GlcNAc...) asparagine glycans are attached at residues Asn125 and Asn180.

It belongs to the diacylglycerol acyltransferase family.

The protein localises to the endoplasmic reticulum membrane. It carries out the reaction a 2-acylglycerol + an acyl-CoA = a 1,2-diacylglycerol + CoA. It catalyses the reaction 2-(9Z-octadecenoyl)-glycerol + butanoyl-CoA = 1-butanoyl-2-(9Z-octadecenoyl)-glycerol + CoA. The catalysed reaction is 2-(9Z-octadecenoyl)-glycerol + octanoyl-CoA = 1-octanoyl-2-(9Z-octadecenoyl)-glycerol + CoA. The enzyme catalyses 2-(9Z-octadecenoyl)-glycerol + dodecanoyl-CoA = 1-dodecanoyl-2-(9Z-octadecenoyl)-glycerol + CoA. It carries out the reaction 2-(9Z-octadecenoyl)-glycerol + tetradecanoyl-CoA = 1-tetradecanoyl-2-(9Z-octadecenoyl)-glycerol + CoA. It catalyses the reaction 2-(9Z-octadecenoyl)-glycerol + hexadecanoyl-CoA = 1-hexadecanoyl-2-(9Z-octadecenoyl)-glycerol + CoA. The catalysed reaction is 2-(9Z-octadecenoyl)-glycerol + octadecanoyl-CoA = 1-octadecanoyl-2-(9Z-octadecenoyl)-glycerol + CoA. The enzyme catalyses eicosanoyl-CoA + 2-(9Z-octadecenoyl)-glycerol = 1-eicosanoyl-2-(9Z-octadecenoyl)-glycerol + CoA. It carries out the reaction 2-(9Z-octadecenoyl)-glycerol + (9Z)-octadecenoyl-CoA = 1,2-di-(9Z-octadecenoyl)-glycerol + CoA. It catalyses the reaction 2-(9Z-octadecenoyl)-glycerol + (9Z,12Z)-octadecadienoyl-CoA = 1-(9Z,12Z-octadecadienoyl)-2-(9Z-octadecenoyl)-glycerol + CoA. The catalysed reaction is 2-(9Z-octadecenoyl)-glycerol + (5Z,8Z,11Z,14Z)-eicosatetraenoyl-CoA = 1-(5Z,8Z,11Z,14Z-eicosatetraenoyl)-2-(9Z-octadecenoyl)-glycerol + CoA. The enzyme catalyses a 2-acylglycerol + an acyl-CoA = a 1,2-diacyl-sn-glycerol + CoA. It carries out the reaction a 2-acylglycerol + an acyl-CoA = a 2,3-diacyl-sn-glycerol + CoA. It catalyses the reaction a 1-acylglycerol + an acyl-CoA = a 1,2-diacylglycerol + CoA. The catalysed reaction is 1-dodecanoylglycerol + (9Z)-octadecenoyl-CoA = 1-dodecanoyl-2-(9Z-octadecenoyl)-glycerol + CoA. The enzyme catalyses 1-tetradecanoylglycerol + (9Z)-octadecenoyl-CoA = 1-tetradecanoyl-2-(9Z-octadecenoyl)-glycerol + CoA. It carries out the reaction 1-hexadecanoylglycerol + (9Z)-octadecenoyl-CoA = 1-hexadecanoyl-2-(9Z-octadecenoyl)-glycerol + CoA. It catalyses the reaction 1-(9Z-octadecenoyl)-glycerol + (9Z)-octadecenoyl-CoA = 1,2-di-(9Z-octadecenoyl)-glycerol + CoA. The catalysed reaction is 1-(9Z,12Z-octadecadienoyl)-glycerol + (9Z)-octadecenoyl-CoA = 1-(9Z,12Z-octadecadienoyl)-2-(9Z-octadecenoyl)-glycerol + CoA. The enzyme catalyses 1-(9Z,12Z,15Z-octadecatrienoyl)-glycerol + (9Z)-octadecenoyl-CoA = 1-(9Z,12Z,15Z-octadecatrienoyl)-2-(9Z-octadecenoyl)-glycerol + CoA. It carries out the reaction 1-(5Z,8Z,11Z,14Z-eicosatetraenoyl)-glycerol + (9Z)-octadecenoyl-CoA = 1-(5Z,8Z,11Z,14Z-eicosatetraenoyl)-2-(9Z-octadecenoyl)-glycerol + CoA. It catalyses the reaction a 1-acylglycerol + an acyl-CoA = a 1,3-diacylglycerol + CoA. The catalysed reaction is 1-dodecanoylglycerol + (9Z)-octadecenoyl-CoA = 1-dodecanoyl-3-(9Z-octadecenoyl)-glycerol + CoA. The enzyme catalyses 1-hexadecanoylglycerol + (9Z)-octadecenoyl-CoA = 1-(9Z-octadecenoyl)-3-hexadecanoylglycerol + CoA. It carries out the reaction 1-octadecanoylglycerol + (9Z)-octadecenoyl-CoA = 1-octadecanoyl-3-(9Z-octadecenoyl)-glycerol + CoA. It catalyses the reaction 1-(9Z-octadecenoyl)-sn-glycerol + (9Z)-octadecenoyl-CoA = 1,3-di-(9Z-octadecenoyl)-glycerol + CoA. The catalysed reaction is 1-(9Z,12Z-octadecadienoyl)-glycerol + (9Z)-octadecenoyl-CoA = 1-(9Z-octadecenoyl)-3-(9Z,12Z-octadecadienoyl)-glycerol + CoA. The enzyme catalyses 1-(9Z,12Z,15Z-octadecatrienoyl)-glycerol + (9Z)-octadecenoyl-CoA = 1-(9Z,12Z,15Z-octadecatrienoyl)-3-(9Z-octadecenoyl)-glycerol + CoA. It carries out the reaction a 1-acyl-sn-glycerol + an acyl-CoA = a 1,3-diacyl-sn-glycerol + CoA. It catalyses the reaction a 3-acyl-sn-glycerol + an acyl-CoA = a 1,3-diacyl-sn-glycerol + CoA. The catalysed reaction is 3-octadecanoyl-sn-glycerol + (9Z)-octadecenoyl-CoA = 1-(9Z-octadecenoyl)-3-octadecanoyl-sn-glycerol + CoA. It participates in glycerolipid metabolism; triacylglycerol biosynthesis. Functionally, involved in glycerolipid synthesis and lipid metabolism. Catalyzes the formation of diacylglycerol, the precursor of triacylglycerol, by transferring the acyl chain of a fatty acyl-CoA to a monoacylglycerol, mainly at the sn-1 or sn-3 positions. It uses both sn-2-monoacylglycerol (2-acylglycerol) and sn-1-monoacylglycerol (1-acyl-sn-glycerol) equally well as substrates, and uses sn-3-monoacylglycerol (3-acyl-sn-glycerol) with lower efficiency. Probably not involved in absorption of dietary fat in the small intestine. The sequence is that of 2-acylglycerol O-acyltransferase 1 (MOGAT1) from Bos taurus (Bovine).